The primary structure comprises 394 residues: Obg-like ATPase 1 (394 aa).

In terms of domain architecture, OBG-type G spans 25 to 282 (LKIGIVGLPN…MAPDEAAKYC (258 aa)). Residues 34–39 (NVGKST), 56–60 (FCTIE), and 94–97 (DIAG) contribute to the ATP site. 2 residues coordinate Mg(2+): Ser38 and Thr58. Phe129 provides a ligand contact to GTP. Residues 230-231 (NL), Leu231, and 263-265 (SGV) each bind ATP. 263–265 (SGV) contributes to the GTP binding site. One can recognise a TGS domain in the interval 303–386 (NLIYFFTAGP…QDGDIIFFKF (84 aa)).

It belongs to the TRAFAC class OBG-HflX-like GTPase superfamily. OBG GTPase family. YchF/OLA1 subfamily. In terms of assembly, monomer (Potential). Interacts with CAR4/GAP1. The cofactor is Mg(2+).

The protein localises to the cytoplasm. It localises to the cytosol. With respect to regulation, activated by GAP1. In terms of biological role, hydrolyzes ATP, and can also hydrolyze GTP with lower efficiency. Has lower affinity for GTP (Potential). Exhibits GTPase activity. Confers sensitivity to salinity stress by suppressing the anti-oxidation enzymatic activities and increasing lipid peroxidation thus leading to the accumulation of reactive oxygen species (ROS). Acts as a negative regulator of disease resistance against bacterial pathogen. In Arabidopsis thaliana (Mouse-ear cress), this protein is Obg-like ATPase 1.